An 89-amino-acid chain; its full sequence is Snake venom serine protease rhinocerase (89 aa).

One can recognise a Peptidase S1 domain in the interval 1–89 (VIGGAECDIN…KVFDYIPWIK (89 aa)). D45 functions as the Charge relay system in the catalytic mechanism. Cysteines 64 and 69 form a disulfide.

It belongs to the peptidase S1 family. Snake venom subfamily. Post-translationally, glycosylated. In terms of tissue distribution, expressed by the venom gland.

Its subcellular location is the secreted. Its activity is regulated as follows. Inhibited by PMSF. Not inhibited by benzamidine. Its function is as follows. Snake venom serine protease that cleaves fibrinogen alpha and beta chains (FGA and FGB), but not gamma chains. Exhibits fibrinolytic and kininogenolytic. Preferentially cleaves after Arg and Lys residues. This chain is Snake venom serine protease rhinocerase, found in Bitis rhinoceros (West African gaboon viper).